The primary structure comprises 445 residues: Rab GDP dissociation inhibitor beta (445 aa).

Methionine 1 bears the N-acetylmethionine mark. The residue at position 57 (lysine 57) is an N6-succinyllysine. Lysine 112 carries the post-translational modification N6-acetyllysine. A Phosphoserine modification is found at serine 130. The residue at position 269 (lysine 269) is an N6-acetyllysine. Position 382 is a phosphoserine (serine 382).

Belongs to the Rab GDI family. As to quaternary structure, interacts with RHOH. Interacts with the GDP-bound inactive forms of RAB3A, RAB3B, RAB3C, RAB5A, RAB5B, RAB5C, RAB8A, RAB8B, RAB10, RAB12, RAB35, and RAB43; binds RAB3D to a lesser extent. Interacts with DZIP1; this interaction negatively regulates the interaction of GDI2 with GDP-bound RAB8A.

It is found in the cytoplasm. Its subcellular location is the membrane. The protein resides in the golgi apparatus. The protein localises to the trans-Golgi network. Functionally, GDP-dissociation inhibitor preventing the GDP to GTP exchange of most Rab proteins. By keeping these small GTPases in their inactive GDP-bound form regulates intracellular membrane trafficking. Negatively regulates protein transport to the cilium and ciliogenesis through the inhibition of RAB8A. The protein is Rab GDP dissociation inhibitor beta (GDI2) of Canis lupus familiaris (Dog).